The chain runs to 954 residues: cGMP-specific 3',5'-cyclic phosphodiesterase alpha (954 aa).

At 1–259 (MMDTKVDQTI…NTFYSSFPFK (259 aa)) the chain is on the cytoplasmic side. A helical transmembrane segment spans residues 260–280 (LFLHSLYMIFICFIYFVVLYF). Residues 281-296 (MLLKKIYTHPFIFHLS) are Extracellular-facing. Residues 297–317 (VLKFLFDIIFFLSFILYPLFL) form a helical membrane-spanning segment. The Cytoplasmic portion of the chain corresponds to 318 to 327 (RLKRIDKIIY). Residues 328 to 348 (SSYISSYIFVCVTFLYSFIIF) traverse the membrane as a helical segment. At 349–365 (KCSSYSVKMNSNTYQNN) the chain is on the extracellular side. Residues 366–386 (FVFQNMLFLLINIIYICIFCF) traverse the membrane as a helical segment. At 387 to 401 (LKNYMILYSFLYNCR) the chain is on the cytoplasmic side. Residues 402–422 (FSIFCILFIFLYYYLFFSLDF) traverse the membrane as a helical segment. Over 423–432 (YRIIHLPLDN) the chain is Extracellular. A helical membrane pass occupies residues 433–453 (FFFPFLCFLFFSFLFIFKIIM). Residues 454 to 954 (SLYYEYVYEK…LSKLELIKFE (501 aa)) lie on the Cytoplasmic side of the membrane. In terms of domain architecture, PDEase spans 586–930 (NQEETKSFLS…ERWESHKNDN (345 aa)). The active-site Proton donor is the His-680. A 3',5'-cyclic GMP-binding site is contributed by 680-684 (HTSLH). Zn(2+) contacts are provided by His-684, His-720, Asp-721, and Asp-832. The 3',5'-cyclic GMP site is built by Asp-721, Asp-832, and Gln-884. Mg(2+) is bound at residue Asp-721.

It belongs to the cyclic nucleotide phosphodiesterase family. Zn(2+) serves as cofactor. The cofactor is Mg(2+).

The protein localises to the membrane. The enzyme catalyses 3',5'-cyclic GMP + H2O = GMP + H(+). It functions in the pathway purine metabolism; 3',5'-cyclic GMP degradation; GMP from 3',5'-cyclic GMP: step 1/1. Its activity is regulated as follows. Not inhibited by cAMP. Inhibited by zaprinast. Specifically hydrolyzes the second messenger cGMP, which is a key regulator of many important physiological processes. This is cGMP-specific 3',5'-cyclic phosphodiesterase alpha from Plasmodium falciparum (isolate 3D7).